The sequence spans 259 residues: Oxidase ustYb (259 aa).

A helical transmembrane segment spans residues 36-56; sequence IIYTSLAFVGFIEILFFGIFF. N-linked (GlcNAc...) asparagine glycosylation is found at Asn102 and Asn122. 2 short sequence motifs (HXXHC) span residues 147-151 and 197-201; these read HQLHC and HVDHC.

Belongs to the ustYa family.

Its subcellular location is the membrane. It participates in mycotoxin biosynthesis. In terms of biological role, oxidase; part of the gene cluster that mediates the biosynthesis of the secondary metabolite ustiloxin B, an antimitotic tetrapeptide. First, ustA is processed by the subtilisin-like endoprotease Kex2 that is outside the ustiloxin B gene cluster, at the C-terminal side of Arg-Lys, after transfer to Golgi apparatus through the endoplasmic reticulum (ER). Cleavage by KEX2 generates 16 peptides YAIG-I to YAIG-XVI. To process the precursor peptide further, at least two peptidases are necessary to cleave the N-terminal and C-terminal sides of the Tyr-Ala-Ile-Gly core peptide which serves as backbone for the synthesis of ustiloxin B, through cyclization and modification of the tyrosine with a non-protein coding amino acid, norvaline. One of the two peptidases must be the serine peptidase ustP; and the other pepdidase is probably ustH. Macrocyclization of the core peptide derived from ustA requires the tyrosinase ustQ, as well as the homologous oxidases ustYa and ustYb, and leads to the production of the first cyclization product N-desmethylustiloxin F. For the formation of N-desmethylustiloxin F, three oxidation steps are required, hydroxylation at the benzylic position, hydroxylation at either the aromatic ring of Tyr or beta-position of Ile, and oxidative cyclization. UstQ may catalyze the oxidation of a phenol moiety, whereas the ustYa and ustYb are most likely responsible for the remaining two-step oxidations. N-desmethylustiloxin F is then methylated by ustM to yield ustiloxin F which in turn substrate of the cytochrome P450 monooxygenase ustC which catalyzes the formation of S-deoxyustiloxin H. The flavoprotein monooxygenases ustF1 and ustF2 then participate in the modification of the side chain of S-deoxyustiloxin H, leading to the synthesis of an oxime intermediate, via ustiloxin H. Finally, carboxylative dehydration performed by the cysteine desulfurase-like protein ustD yields ustiloxin B. The sequence is that of Oxidase ustYb from Aspergillus flavus (strain ATCC 200026 / FGSC A1120 / IAM 13836 / NRRL 3357 / JCM 12722 / SRRC 167).